Reading from the N-terminus, the 377-residue chain is Chaperone protein DnaJ (377 aa).

Residues 5–70 (DYYEVLGVSR…DKKAAYDQFG (66 aa)) form the J domain. The segment at 133–211 (GLTKELRIPT…CHGDGRVEKS (79 aa)) adopts a CR-type zinc-finger fold. Zn(2+) contacts are provided by C146, C149, C163, C166, C185, C188, C199, and C202. CXXCXGXG motif repeat units lie at residues 146–153 (CDLCEGSG), 163–170 (CGTCHGQG), 185–192 (CPTCHGRG), and 199–206 (CTKCHGDG).

Belongs to the DnaJ family. In terms of assembly, homodimer. The cofactor is Zn(2+).

The protein localises to the cytoplasm. Functionally, participates actively in the response to hyperosmotic and heat shock by preventing the aggregation of stress-denatured proteins and by disaggregating proteins, also in an autonomous, DnaK-independent fashion. Unfolded proteins bind initially to DnaJ; upon interaction with the DnaJ-bound protein, DnaK hydrolyzes its bound ATP, resulting in the formation of a stable complex. GrpE releases ADP from DnaK; ATP binding to DnaK triggers the release of the substrate protein, thus completing the reaction cycle. Several rounds of ATP-dependent interactions between DnaJ, DnaK and GrpE are required for fully efficient folding. Also involved, together with DnaK and GrpE, in the DNA replication of plasmids through activation of initiation proteins. In Shewanella baltica (strain OS223), this protein is Chaperone protein DnaJ.